The primary structure comprises 237 residues: Urease accessory protein UreF (237 aa).

This sequence belongs to the UreF family. UreD, UreF and UreG form a complex that acts as a GTP-hydrolysis-dependent molecular chaperone, activating the urease apoprotein by helping to assemble the nickel containing metallocenter of UreC. The UreE protein probably delivers the nickel.

Its subcellular location is the cytoplasm. Required for maturation of urease via the functional incorporation of the urease nickel metallocenter. The protein is Urease accessory protein UreF of Methylibium petroleiphilum (strain ATCC BAA-1232 / LMG 22953 / PM1).